We begin with the raw amino-acid sequence, 1032 residues long: Integrin alpha-4 (1032 aa).

The N-terminal stretch at 1–33 is a signal peptide; it reads MAWEARREPGPRRAAVRETVMLLLCLGVPTGRP. FG-GAP repeat units lie at residues 35-100, 110-177, 185-237, 238-291, 292-351, 355-412, and 416-478; these read NVDT…PGQT, NGEP…TELS, QDYV…KYKA, FLDK…EKEL, NILH…GAVM, ETNL…GISS, and QRIE…HPES. Residues 35 to 977 are Extracellular-facing; the sequence is NVDTESALLY…HHQRPKRYFT (943 aa). The N-linked (GlcNAc...) asparagine glycan is linked to N79. C91 and C101 are joined by a disulfide. N138 carries an N-linked (GlcNAc...) asparagine glycan. 2 cysteine pairs are disulfide-bonded: C144/C165 and C183/C198. N229 carries N-linked (GlcNAc...) asparagine glycosylation. 13 residues coordinate Ca(2+): D314, N316, D318, D322, D377, D379, D381, D385, D439, D441, N443, Y445, and D447. A glycan (N-linked (GlcNAc...) asparagine) is linked at N480. Disulfide bonds link C486-C495 and C501-C557. Residues N518 and N538 are each glycosylated (N-linked (GlcNAc...) asparagine). Positions 606 to 616 match the SG1 motif; sequence KKEKDIMKKTI. C622 and C627 are oxidised to a cystine. Residues N626, N645, and N660 are each glycosylated (N-linked (GlcNAc...) asparagine). A disulfide bond links C698 and C711. Residues N806 and N821 are each glycosylated (N-linked (GlcNAc...) asparagine). 2 cysteine pairs are disulfide-bonded: C852–C890 and C897–C902. A helical membrane pass occupies residues 978–1001; sequence IVIISSSLLLGLIVLLLISYVMWK. Topologically, residues 1002-1032 are cytoplasmic; sequence AGFFKRQYKSILQEENRRDSWSYINSKSNDD. Positions 1003–1007 match the GFFKR motif motif; the sequence is GFFKR. Position 1021 is a phosphoserine (S1021).

Belongs to the integrin alpha chain family. As to quaternary structure, heterodimer of an alpha and a beta subunit. The alpha subunit can sometimes be cleaved into two non-covalently associated fragments. Alpha-4 associates with either beta-1 or beta-7. Alpha-4 interacts with PXN, LPXN, and TGFB1I1/HIC5. Interacts with CSPG4 through CSPG4 chondroitin sulfate glycosaminoglycan. Interacts with JAML; integrin alpha-4/beta-1 may regulate leukocyte to endothelial cells adhesion by controlling JAML homodimerization. ITGA4:ITGB1 is found in a ternary complex with CX3CR1 and CX3CL1. Interacts with MDK. ITGA4:ITGB1 interacts with MDK; this interaction mediates MDK-induced osteoblast cells migration through PXN phosphorylation. Integrin ITGA4:ITGB1 interacts with SVEP1 (via Sushi domain 21); thereby inhibits Ca(2+) intracellular signaling and as a result represses vasocontraction. ITGA4:ITGB1 interacts with SELP. ITGA4:ITGB1 interacts with BCAM. Phosphorylation on Ser-1027 inhibits PXN binding. Expressed in vascular smooth muscle cells (at protein level).

The protein localises to the membrane. Its function is as follows. Integrins alpha-4/beta-1 (VLA-4) and alpha-4/beta-7 are receptors for fibronectin. They recognize one or more domains within the alternatively spliced CS-1 and CS-5 regions of fibronectin. They are also receptors for VCAM1. Integrin alpha-4/beta-1 recognizes the sequence Q-I-D-S in VCAM1. Integrin alpha-4/beta-7 is also a receptor for MADCAM1. It recognizes the sequence L-D-T in MADCAM1. On activated endothelial cells integrin VLA-4 triggers homotypic aggregation for most VLA-4-positive leukocyte cell lines. It may also participate in cytolytic T-cell interactions with target cells. ITGA4:ITGB1 binds to fractalkine (CX3CL1) and may act as its coreceptor in CX3CR1-dependent fractalkine signaling. ITGA4:ITGB1 binds to PLA2G2A via a site (site 2) which is distinct from the classical ligand-binding site (site 1) and this induces integrin conformational changes and enhanced ligand binding to site 1. Integrin ITGA4:ITGB1 represses PRKCA-mediated L-type voltage-gated channel Ca(2+) influx and ROCK-mediated calcium sensitivity in vascular smooth muscle cells via its interaction with SVEP1, thereby inhibiting vasocontraction. In Homo sapiens (Human), this protein is Integrin alpha-4 (ITGA4).